Consider the following 215-residue polypeptide: 25 kDa ookinete surface antigen (215 aa).

An N-terminal signal peptide occupies residues 1 to 16 (MNMSYLFFFFFIQLVL). An EGF-like 1; truncated domain is found at 29 to 58 (CKDGFLIQMSNHFECNCNPGFVLTSESTCE). EGF-like domains lie at 59–104 (NKVE…SICV), 104–148 (VPNE…NTCT), and 151–191 (GQTE…NACI). 9 cysteine pairs are disulfide-bonded: C63/C78, C72/C90, C92/C103, C108/C118, C113/C131, C133/C147, C155/C166, C159/C175, and C177/C190. N-linked (GlcNAc...) asparagine glycosylation is found at N144 and N163. The GPI-anchor amidated serine moiety is linked to residue S192. Positions 193–215 (FSLFNILNLSIIFIISLIYFYII) are cleaved as a propeptide — removed in mature form. N-linked (GlcNAc...) asparagine glycosylation is present at N200.

It localises to the cell membrane. This is 25 kDa ookinete surface antigen from Plasmodium gallinaceum.